A 239-amino-acid chain; its full sequence is Orotidine 5'-phosphate decarboxylase (239 aa).

Residues aspartate 12, lysine 34, 61–70 (DLKFHDIPNT), threonine 125, arginine 188, glutamine 197, glycine 217, and arginine 218 each bind substrate. The Proton donor role is filled by lysine 63.

Belongs to the OMP decarboxylase family. Type 1 subfamily. As to quaternary structure, homodimer.

It carries out the reaction orotidine 5'-phosphate + H(+) = UMP + CO2. It functions in the pathway pyrimidine metabolism; UMP biosynthesis via de novo pathway; UMP from orotate: step 2/2. In terms of biological role, catalyzes the decarboxylation of orotidine 5'-monophosphate (OMP) to uridine 5'-monophosphate (UMP). The chain is Orotidine 5'-phosphate decarboxylase from Syntrophomonas wolfei subsp. wolfei (strain DSM 2245B / Goettingen).